Reading from the N-terminus, the 438-residue chain is Probable glycine dehydrogenase (decarboxylating) subunit 1 (438 aa).

This sequence belongs to the GcvP family. N-terminal subunit subfamily. The glycine cleavage system is composed of four proteins: P, T, L and H. In this organism, the P 'protein' is a heterodimer of two subunits.

It catalyses the reaction N(6)-[(R)-lipoyl]-L-lysyl-[glycine-cleavage complex H protein] + glycine + H(+) = N(6)-[(R)-S(8)-aminomethyldihydrolipoyl]-L-lysyl-[glycine-cleavage complex H protein] + CO2. In terms of biological role, the glycine cleavage system catalyzes the degradation of glycine. The P protein binds the alpha-amino group of glycine through its pyridoxal phosphate cofactor; CO(2) is released and the remaining methylamine moiety is then transferred to the lipoamide cofactor of the H protein. This is Probable glycine dehydrogenase (decarboxylating) subunit 1 from Syntrophomonas wolfei subsp. wolfei (strain DSM 2245B / Goettingen).